The following is an 89-amino-acid chain: Small ribosomal subunit protein uS19 (89 aa).

It belongs to the universal ribosomal protein uS19 family.

Functionally, protein S19 forms a complex with S13 that binds strongly to the 16S ribosomal RNA. The protein is Small ribosomal subunit protein uS19 of Bacteroides fragilis (strain YCH46).